Consider the following 313-residue polypeptide: MLDNVLKIATRQSPLALWQAHYVKDALMATHPGLTVELVPMVTRGDVILDTPLAKVGGKGLFVKELEIALLEKRADIAVHSMKDVPVAFPDGLGLVTICEREDPRDAFVSNQYHSLDDLPAGSIVGTSSLRRQCQLAERRPDLIIRSLRGNVGTRLGKLDNGDYDAIILAVAGLKRLGLASRIRTALPPEVSLPAVGQGAIGIECRLDDARTHALLAPLNHPQTALRVTAERAMNTRLEGGCQVPIGSYAEIFNGEIWLRALVGAPDGSVMVRGERRGSPEQAEQMGISLAEELLENGARAILTAVYNGEAPA.

An S-(dipyrrolylmethanemethyl)cysteine modification is found at Cys242.

The protein belongs to the HMBS family. As to quaternary structure, monomer. Dipyrromethane serves as cofactor.

It carries out the reaction 4 porphobilinogen + H2O = hydroxymethylbilane + 4 NH4(+). Its pathway is porphyrin-containing compound metabolism; protoporphyrin-IX biosynthesis; coproporphyrinogen-III from 5-aminolevulinate: step 2/4. Its function is as follows. Tetrapolymerization of the monopyrrole PBG into the hydroxymethylbilane pre-uroporphyrinogen in several discrete steps. In Salmonella arizonae (strain ATCC BAA-731 / CDC346-86 / RSK2980), this protein is Porphobilinogen deaminase.